A 176-amino-acid chain; its full sequence is Oleosin Ara h 14.0102 (176 aa).

The residue at position 2 (alanine 2) is an N-acetylalanine; alternate. The next 2 membrane-spanning stretches (helical) occupy residues 61–81 (GTLL…LAIA) and 87–107 (FFSP…IGIL). The segment at 156–176 (KTKDAGQEIQTKAQDVKRSSS) is disordered.

The protein belongs to the oleosin family. As to quaternary structure, homodimer. Forms oligomers. Expressed in seeds (at protein level). Not expressed in leaves.

Its subcellular location is the lipid droplet. The protein localises to the membrane. Functionally, may have a structural role to stabilize the lipid body during desiccation of the seed by preventing coalescence of the oil. Probably interacts with both lipid and phospholipid moieties of lipid bodies. May also provide recognition signals for specific lipase anchorage in lipolysis during seedling growth. The polypeptide is Oleosin Ara h 14.0102 (Arachis hypogaea (Peanut)).